The chain runs to 868 residues: Leucine--tRNA ligase (868 aa).

The 'HIGH' region signature appears at 42 to 52 (PYPSGKLHMGH). Positions 624-628 (TMSKS) match the 'KMSKS' region motif. Residue Lys-627 coordinates ATP.

Belongs to the class-I aminoacyl-tRNA synthetase family.

It is found in the cytoplasm. The catalysed reaction is tRNA(Leu) + L-leucine + ATP = L-leucyl-tRNA(Leu) + AMP + diphosphate. The protein is Leucine--tRNA ligase of Nitrosomonas eutropha (strain DSM 101675 / C91 / Nm57).